We begin with the raw amino-acid sequence, 146 residues long: Hemoglobin subunit beta (146 aa).

The region spanning 2–146 is the Globin domain; it reads QWTAEEKQLI…VAHALARKYH (145 aa). Positions 63 and 92 each coordinate heme b.

This sequence belongs to the globin family. As to quaternary structure, heterotetramer of two alpha chains and two beta chains. Red blood cells.

Functionally, involved in oxygen transport from the lung to the various peripheral tissues. In Rhea americana (Greater rhea), this protein is Hemoglobin subunit beta (HBB).